A 219-amino-acid chain; its full sequence is Orotate phosphoribosyltransferase (219 aa).

Lys-26 serves as a coordination point for 5-phospho-alpha-D-ribose 1-diphosphate. Orotate is bound at residue 34–35 (FF). 5-phospho-alpha-D-ribose 1-diphosphate-binding positions include 72–73 (YK), Arg-98, Lys-99, Lys-102, His-104, and 124–132 (DDVITAGTA). Residues Thr-128 and Arg-156 each coordinate orotate.

It belongs to the purine/pyrimidine phosphoribosyltransferase family. PyrE subfamily. As to quaternary structure, homodimer. Mg(2+) is required as a cofactor.

It catalyses the reaction orotidine 5'-phosphate + diphosphate = orotate + 5-phospho-alpha-D-ribose 1-diphosphate. It functions in the pathway pyrimidine metabolism; UMP biosynthesis via de novo pathway; UMP from orotate: step 1/2. Functionally, catalyzes the transfer of a ribosyl phosphate group from 5-phosphoribose 1-diphosphate to orotate, leading to the formation of orotidine monophosphate (OMP). The chain is Orotate phosphoribosyltransferase from Xylella fastidiosa (strain Temecula1 / ATCC 700964).